The sequence spans 418 residues: Tyrosine--tRNA ligase (418 aa).

A 'HIGH' region motif is present at residues P42–H51. The short motif at K226–S230 is the 'KMSKS' region element. K229 serves as a coordination point for ATP. Positions V339–L400 constitute an S4 RNA-binding domain.

The protein belongs to the class-I aminoacyl-tRNA synthetase family. TyrS type 2 subfamily. As to quaternary structure, homodimer.

The protein localises to the cytoplasm. The enzyme catalyses tRNA(Tyr) + L-tyrosine + ATP = L-tyrosyl-tRNA(Tyr) + AMP + diphosphate + H(+). Its function is as follows. Catalyzes the attachment of tyrosine to tRNA(Tyr) in a two-step reaction: tyrosine is first activated by ATP to form Tyr-AMP and then transferred to the acceptor end of tRNA(Tyr). This chain is Tyrosine--tRNA ligase, found in Xylella fastidiosa (strain 9a5c).